We begin with the raw amino-acid sequence, 170 residues long: MGAKSKQYFNIFVFVISLIFFDQLSKYLVVKYVKLGSIYFSFFDNFFRIIHVRNTGILFSMGSDIHYSLKKIFFIAMPIFILIFVFSLALKEKNCITRISLLLIFSGGVGNIIDRLFRPSGVVDFLDFKFYGIFGLDRWPTFNFADSYVVIGMILFLVYDFFIKRKVLNT.

3 consecutive transmembrane segments (helical) span residues 9–29 (FNIF…KYLV), 72–92 (IFFI…ALKE), and 95–117 (CITR…DRLF). Residues D124 and D146 contribute to the active site. The helical transmembrane segment at 143 to 163 (NFADSYVVIGMILFLVYDFFI) threads the bilayer.

The protein belongs to the peptidase A8 family.

It is found in the cell inner membrane. The enzyme catalyses Release of signal peptides from bacterial membrane prolipoproteins. Hydrolyzes -Xaa-Yaa-Zaa-|-(S,diacylglyceryl)Cys-, in which Xaa is hydrophobic (preferably Leu), and Yaa (Ala or Ser) and Zaa (Gly or Ala) have small, neutral side chains.. The protein operates within protein modification; lipoprotein biosynthesis (signal peptide cleavage). Functionally, this protein specifically catalyzes the removal of signal peptides from prolipoproteins. The protein is Lipoprotein signal peptidase of Borrelia garinii subsp. bavariensis (strain ATCC BAA-2496 / DSM 23469 / PBi) (Borreliella bavariensis).